Consider the following 215-residue polypeptide: 16S rRNA (adenine(1408)-N(1))-methyltransferase (215 aa).

Residues Gly-32, Asp-55, 87-88 (AE), 102-107 (LMPWGS), and 191-193 (TSW) contribute to the S-adenosyl-L-methionine site.

Belongs to the methyltransferase superfamily. Kanamycin-apramycin resistance family.

It carries out the reaction adenosine(1408) in 16S rRNA + S-adenosyl-L-methionine = N(1)-methyladenosine(1408) in 16S rRNA + S-adenosyl-L-homocysteine + H(+). Its function is as follows. Specifically methylates the N(1) position of adenine 1408 in 16S rRNA. Confers resistance to various aminoglycosides, including kanamycin, neomycin and apramycin. This Streptoalloteichus tenebrarius (strain ATCC 17920 / DSM 40477 / JCM 4838 / CBS 697.72 / NBRC 16177 / NCIMB 11028 / NRRL B-12390 / A12253. 1 / ISP 5477) (Streptomyces tenebrarius) protein is 16S rRNA (adenine(1408)-N(1))-methyltransferase (kamB).